The primary structure comprises 503 residues: Probable cytosol aminopeptidase (503 aa).

Lysine 270 and aspartate 275 together coordinate Mn(2+). The active site involves lysine 282. Residues aspartate 293, aspartate 352, and glutamate 354 each coordinate Mn(2+). The active site involves arginine 356.

The protein belongs to the peptidase M17 family. Requires Mn(2+) as cofactor.

The protein resides in the cytoplasm. It carries out the reaction Release of an N-terminal amino acid, Xaa-|-Yaa-, in which Xaa is preferably Leu, but may be other amino acids including Pro although not Arg or Lys, and Yaa may be Pro. Amino acid amides and methyl esters are also readily hydrolyzed, but rates on arylamides are exceedingly low.. The enzyme catalyses Release of an N-terminal amino acid, preferentially leucine, but not glutamic or aspartic acids.. Its function is as follows. Presumably involved in the processing and regular turnover of intracellular proteins. Catalyzes the removal of unsubstituted N-terminal amino acids from various peptides. The chain is Probable cytosol aminopeptidase from Klebsiella pneumoniae subsp. pneumoniae (strain ATCC 700721 / MGH 78578).